A 431-amino-acid chain; its full sequence is Histidine--tRNA ligase (431 aa).

The protein belongs to the class-II aminoacyl-tRNA synthetase family. Homodimer.

Its subcellular location is the cytoplasm. It catalyses the reaction tRNA(His) + L-histidine + ATP = L-histidyl-tRNA(His) + AMP + diphosphate + H(+). The protein is Histidine--tRNA ligase of Neisseria gonorrhoeae (strain ATCC 700825 / FA 1090).